A 369-amino-acid polypeptide reads, in one-letter code: Cobalt-precorrin-5B C(1)-methyltransferase (369 aa).

The protein belongs to the CbiD family.

The catalysed reaction is Co-precorrin-5B + S-adenosyl-L-methionine = Co-precorrin-6A + S-adenosyl-L-homocysteine. The protein operates within cofactor biosynthesis; adenosylcobalamin biosynthesis; cob(II)yrinate a,c-diamide from sirohydrochlorin (anaerobic route): step 6/10. Catalyzes the methylation of C-1 in cobalt-precorrin-5B to form cobalt-precorrin-6A. The protein is Cobalt-precorrin-5B C(1)-methyltransferase of Brucella melitensis biotype 2 (strain ATCC 23457).